We begin with the raw amino-acid sequence, 224 residues long: Metalloproteinase inhibitor 4 (224 aa).

Positions 1-29 (MPGSPRPAPSWVLLLRLLALLRPPGLGEA) are cleaved as a signal peptide. Zn(2+) is bound at residue cysteine 30. 2 involved in metalloproteinase-binding regions span residues 30–33 (CSCA) and 99–100 (SS). Cystine bridges form between cysteine 30–cysteine 102, cysteine 32–cysteine 131, cysteine 42–cysteine 156, cysteine 158–cysteine 205, cysteine 163–cysteine 168, and cysteine 176–cysteine 197. The NTR domain occupies 30–156 (CSCAPAHPQQ…SLNHHYHLNC (127 aa)).

It belongs to the protease inhibitor I35 (TIMP) family. In terms of tissue distribution, abundant in heart and present at low levels in many other tissues.

Its subcellular location is the secreted. In terms of biological role, complexes with metalloproteinases (such as collagenases) and irreversibly inactivates them by binding to their catalytic zinc cofactor. Known to act on MMP-1, MMP-2, MMP-3, MMP-7 and MMP-9. The polypeptide is Metalloproteinase inhibitor 4 (TIMP4) (Homo sapiens (Human)).